A 59-amino-acid chain; its full sequence is Temperature acclimation protein A (59 aa).

The CSD domain occupies 1–55 (FNDEKGFGFITPESGPDLFVHFRAIQGNGFKSLKEGQKVTFIAVQGQKGMQADKV).

It localises to the cytoplasm. Its function is as follows. Affects cell viability at low temperatures. The sequence is that of Temperature acclimation protein A (tapA) from Pseudomonas fragi.